Consider the following 747-residue polypeptide: Cysteine--tRNA ligase, cytoplasmic (747 aa).

A disordered region spans residues 1–25 (MTDSWERGKGRRTQPPWSAPNTQAQ). Polar residues predominate over residues 15-25 (PPWSAPNTQAQ). Zn(2+) is bound at residue C54. L-cysteine is bound at residue G55. The 'HIGH' region motif lies at 56 to 66 (PTVYDASHMGH). T95 serves as a coordination point for L-cysteine. The 'KIIK' region motif lies at 100-103 (KIIK). Residues C347, H372, and E376 each contribute to the Zn(2+) site. H372 is an L-cysteine binding site. Positions 405-409 (KMSKS) match the 'KMSKS' region motif. ATP is bound at residue K408. The span at 651 to 683 (EEKRKAEEEKQRKKEEAARKKQQQEAAKLEKMK) shows a compositional bias: basic and acidic residues. The tract at residues 651 to 722 (EEKRKAEEEK…KELSKGQSKK (72 aa)) is disordered.

This sequence belongs to the class-I aminoacyl-tRNA synthetase family. As to quaternary structure, homodimer. Zn(2+) serves as cofactor.

It localises to the cytoplasm. It carries out the reaction tRNA(Cys) + L-cysteine + ATP = L-cysteinyl-tRNA(Cys) + AMP + diphosphate. Functionally, catalyzes the ATP-dependent ligation of cysteine to tRNA(Cys). The sequence is that of Cysteine--tRNA ligase, cytoplasmic (cars1) from Xenopus tropicalis (Western clawed frog).